We begin with the raw amino-acid sequence, 158 residues long: UPF0262 protein Rsph17025_0594 (158 aa).

Belongs to the UPF0262 family.

This is UPF0262 protein Rsph17025_0594 from Cereibacter sphaeroides (strain ATCC 17025 / ATH 2.4.3) (Rhodobacter sphaeroides).